A 348-amino-acid chain; its full sequence is Uroporphyrinogen decarboxylase (348 aa).

Substrate is bound by residues 23–27 (RQAGR), Asp72, Tyr148, Ser203, and His316.

The protein belongs to the uroporphyrinogen decarboxylase family. As to quaternary structure, homodimer.

Its subcellular location is the cytoplasm. The enzyme catalyses uroporphyrinogen III + 4 H(+) = coproporphyrinogen III + 4 CO2. It participates in porphyrin-containing compound metabolism; protoporphyrin-IX biosynthesis; coproporphyrinogen-III from 5-aminolevulinate: step 4/4. Catalyzes the decarboxylation of four acetate groups of uroporphyrinogen-III to yield coproporphyrinogen-III. This chain is Uroporphyrinogen decarboxylase, found in Myxococcus xanthus (strain DK1622).